We begin with the raw amino-acid sequence, 370 residues long: UDP-3-O-acylglucosamine N-acyltransferase (370 aa).

H252 serves as the catalytic Proton acceptor. Residues 350-370 (AAGRQDGPAANAASSSAGDKA) are disordered. Positions 358-370 (AANAASSSAGDKA) are enriched in low complexity.

It belongs to the transferase hexapeptide repeat family. LpxD subfamily. Homotrimer.

The enzyme catalyses a UDP-3-O-[(3R)-3-hydroxyacyl]-alpha-D-glucosamine + a (3R)-hydroxyacyl-[ACP] = a UDP-2-N,3-O-bis[(3R)-3-hydroxyacyl]-alpha-D-glucosamine + holo-[ACP] + H(+). Its pathway is bacterial outer membrane biogenesis; LPS lipid A biosynthesis. Its function is as follows. Catalyzes the N-acylation of UDP-3-O-acylglucosamine using 3-hydroxyacyl-ACP as the acyl donor. Is involved in the biosynthesis of lipid A, a phosphorylated glycolipid that anchors the lipopolysaccharide to the outer membrane of the cell. This is UDP-3-O-acylglucosamine N-acyltransferase from Paraburkholderia xenovorans (strain LB400).